Consider the following 611-residue polypeptide: Acetylcholinesterase (611 aa).

The N-terminal stretch at 1-31 is a signal peptide; the sequence is MRPPWCPLYTPSLAAPILLLLLFLLGGGAEA. A disulfide bridge links Cys-97 with Cys-124. Ser-231 (acyl-ester intermediate) is an active-site residue. The cysteines at positions 285 and 300 are disulfide-linked. Residue Asn-293 is glycosylated (N-linked (GlcNAc...) asparagine). Glu-362 acts as the Charge relay system in catalysis. Residue Asn-378 is glycosylated (N-linked (GlcNAc...) asparagine). Cys-437 and Cys-557 are disulfide-bonded. The active-site Charge relay system is His-475. Residue Asn-492 is glycosylated (N-linked (GlcNAc...) asparagine).

The protein belongs to the type-B carboxylesterase/lipase family. As to quaternary structure, interacts with PRIMA1. The interaction with PRIMA1 is required to anchor it to the basal lamina of cells and organize into tetramers. Isoform H generates GPI-anchored dimers; disulfide linked. Isoform T generates multiple structures, ranging from monomers and dimers to collagen-tailed and hydrophobic-tailed forms, in which catalytic tetramers are associated with anchoring proteins that attach them to the basal lamina or to cell membranes. In the collagen-tailed forms, isoform T subunits are associated with a specific collagen, COLQ, which triggers the formation of isoform T tetramers, from monomers and dimers.

Its subcellular location is the synapse. It is found in the secreted. It localises to the cell membrane. It catalyses the reaction acetylcholine + H2O = choline + acetate + H(+). In terms of biological role, terminates signal transduction at the neuromuscular junction by rapid hydrolysis of the acetylcholine released into the synaptic cleft. This chain is Acetylcholinesterase (ACHE), found in Felis catus (Cat).